The following is a 136-amino-acid chain: Large ribosomal subunit protein uL16c (136 aa).

The protein belongs to the universal ribosomal protein uL16 family. Part of the 50S ribosomal subunit.

It localises to the plastid. The protein resides in the chloroplast. This chain is Large ribosomal subunit protein uL16c, found in Chlamydomonas reinhardtii (Chlamydomonas smithii).